A 78-amino-acid polypeptide reads, in one-letter code: uncharacterized protein (78 aa).

This is an uncharacterized protein from Plasmodium falciparum (isolate fcm17 / Senegal).